The primary structure comprises 271 residues: Adenosylcobinamide-GDP ribazoletransferase (271 aa).

Transmembrane regions (helical) follow at residues 4 to 24 (FLLALRTTFGFLSTIPVGMSM), 35 to 55 (YLQTFAGIVLGSMIGIFAYLT), 58 to 78 (FLPSTISAVLIMVFIYYITGL), 108 to 128 (SLGIGGVSYTVLALIALYASI), 135 to 155 (VLFFSDNAALIIAISLLIAEI), 192 to 212 (FVLGALVCVLAFGTLGIIGYI), and 246 to 266 (IIVLMVLTVAITAVNNGYGGL).

It belongs to the CobS family. The cofactor is Mg(2+).

The protein localises to the cell membrane. The catalysed reaction is alpha-ribazole + adenosylcob(III)inamide-GDP = adenosylcob(III)alamin + GMP + H(+). It catalyses the reaction alpha-ribazole 5'-phosphate + adenosylcob(III)inamide-GDP = adenosylcob(III)alamin 5'-phosphate + GMP + H(+). Its pathway is cofactor biosynthesis; adenosylcobalamin biosynthesis; adenosylcobalamin from cob(II)yrinate a,c-diamide: step 7/7. In terms of biological role, joins adenosylcobinamide-GDP and alpha-ribazole to generate adenosylcobalamin (Ado-cobalamin). Also synthesizes adenosylcobalamin 5'-phosphate from adenosylcobinamide-GDP and alpha-ribazole 5'-phosphate. The polypeptide is Adenosylcobinamide-GDP ribazoletransferase (Methanococcoides burtonii (strain DSM 6242 / NBRC 107633 / OCM 468 / ACE-M)).